The sequence spans 1798 residues: U3 small nucleolar RNA-associated protein 10 (1798 aa).

Residues 583 to 620 form an HEAT 1 repeat; it reads LDFQALLPFLLVTLTDPSERVRREAAAALAAVGSLYKK. 2 helical membrane passes run 942–962 and 998–1018; these read IQSG…AIVN and ALLL…HSVM. HEAT repeat units follow at residues 1042–1079, 1249–1286, 1293–1331, and 1754–1791; these read QTID…AFEH, LTLV…QNPE, IRVL…KYGK, and ALLP…VLGE.

This sequence belongs to the HEATR1/UTP10 family. In terms of assembly, component of the ribosomal small subunit (SSU) processome.

The protein localises to the nucleus. Its subcellular location is the nucleolus. It is found in the membrane. Its function is as follows. Involved in nucleolar processing of pre-18S ribosomal RNA. Involved in ribosome biosynthesis. This is U3 small nucleolar RNA-associated protein 10 from Aspergillus fumigatus (strain ATCC MYA-4609 / CBS 101355 / FGSC A1100 / Af293) (Neosartorya fumigata).